Reading from the N-terminus, the 320-residue chain is D-alanine--D-alanine ligase (320 aa).

One can recognise an ATP-grasp domain in the interval 120–314 (SSWFFANSIN…FTNLIAEIIK (195 aa)). Residue 147–198 (MKRPYVIKPLTQGSSIGVEVIFEEDDFNFADYDFPYGDQVVIERYIKGREFQ) participates in ATP binding. Mg(2+) contacts are provided by Glu-267, Glu-281, and Asn-283.

The protein belongs to the D-alanine--D-alanine ligase family. Mg(2+) is required as a cofactor. The cofactor is Mn(2+).

Its subcellular location is the cytoplasm. The catalysed reaction is 2 D-alanine + ATP = D-alanyl-D-alanine + ADP + phosphate + H(+). It functions in the pathway cell wall biogenesis; peptidoglycan biosynthesis. In terms of biological role, cell wall formation. This Rickettsia akari (strain Hartford) protein is D-alanine--D-alanine ligase.